Here is a 124-residue protein sequence, read N- to C-terminus: Histone H2A (124 aa).

Residues 1–18 (MSGRGKGGKAKGKSKSRS) show a composition bias toward basic residues. The segment at 1–23 (MSGRGKGGKAKGKSKSRSSRAGL) is disordered. S2 bears the N-acetylserine mark. Residue S2 is modified to Phosphoserine. The residue at position 104 (Q104) is an N5-methylglutamine.

Belongs to the histone H2A family. The nucleosome is a histone octamer containing two molecules each of H2A, H2B, H3 and H4 assembled in one H3-H4 heterotetramer and two H2A-H2B heterodimers. The octamer wraps approximately 147 bp of DNA. In terms of processing, the N-terminal serine is acetylated. That serine is also phosphorylated in approximately 60% of the molecules isolated from erythrocytes.

It localises to the nucleus. Its subcellular location is the chromosome. Functionally, core component of nucleosome. Nucleosomes wrap and compact DNA into chromatin, limiting DNA accessibility to the cellular machineries which require DNA as a template. Histones thereby play a central role in transcription regulation, DNA repair, DNA replication and chromosomal stability. DNA accessibility is regulated via a complex set of post-translational modifications of histones, also called histone code, and nucleosome remodeling. In Sipunculus nudus (Sipunculan worm), this protein is Histone H2A.